Reading from the N-terminus, the 245-residue chain is Acetylglutamate kinase (245 aa).

Residues 41–42 (GG), R63, and N156 each bind substrate.

The protein belongs to the acetylglutamate kinase family. ArgB subfamily.

The protein resides in the cytoplasm. The catalysed reaction is N-acetyl-L-glutamate + ATP = N-acetyl-L-glutamyl 5-phosphate + ADP. Its pathway is amino-acid biosynthesis; L-arginine biosynthesis; N(2)-acetyl-L-ornithine from L-glutamate: step 2/4. In terms of biological role, catalyzes the ATP-dependent phosphorylation of N-acetyl-L-glutamate. The sequence is that of Acetylglutamate kinase from Streptococcus mutans serotype c (strain ATCC 700610 / UA159).